A 128-amino-acid polypeptide reads, in one-letter code: MAYRKLGRTSSQRKAMLRDLTTDLIINESIVTTEARAKEIRKTVEKMITLGKRGDLHARRQAAAFVRNEIASENYDEATEKYTSTTALQKLFSELAPRYAERNGGYTRILKTEPRRGDAAPMAIIELV.

Belongs to the bacterial ribosomal protein bL17 family. Part of the 50S ribosomal subunit. Contacts protein L32.

This Streptococcus gordonii (strain Challis / ATCC 35105 / BCRC 15272 / CH1 / DL1 / V288) protein is Large ribosomal subunit protein bL17.